A 196-amino-acid chain; its full sequence is Potassium-transporting ATPase KdpC subunit (196 aa).

A helical transmembrane segment spans residues 17–37 (LLLLVATAGLGLVYPLAVFAV). Residues 73 to 93 (QPRPSAAGDGYDPTASGASNL) form a disordered region.

This sequence belongs to the KdpC family. As to quaternary structure, the system is composed of three essential subunits: KdpA, KdpB and KdpC.

Its subcellular location is the cell membrane. In terms of biological role, part of the high-affinity ATP-driven potassium transport (or Kdp) system, which catalyzes the hydrolysis of ATP coupled with the electrogenic transport of potassium into the cytoplasm. This subunit acts as a catalytic chaperone that increases the ATP-binding affinity of the ATP-hydrolyzing subunit KdpB by the formation of a transient KdpB/KdpC/ATP ternary complex. This is Potassium-transporting ATPase KdpC subunit from Kineococcus radiotolerans (strain ATCC BAA-149 / DSM 14245 / SRS30216).